The chain runs to 233 residues: Snake venom serine protease ussurase (233 aa).

The Peptidase S1 domain occupies 1–224 (VIGGVECNIN…YTDWIQSIIS (224 aa)). 6 disulfide bridges follow: Cys7-Cys138, Cys25-Cys41, Cys73-Cys231, Cys117-Cys185, Cys149-Cys164, and Cys175-Cys200. His40 (charge relay system) is an active-site residue. Asn54 carries N-linked (GlcNAc...) asparagine glycosylation. The Charge relay system role is filled by Asp85. Catalysis depends on Ser179, which acts as the Charge relay system.

This sequence belongs to the peptidase S1 family. Snake venom subfamily. Monomer. As to expression, expressed by the venom gland.

It is found in the secreted. Functionally, snake venom serine protease that may act in the hemostasis system of the prey. The protein is Snake venom serine protease ussurase of Gloydius ussuriensis (Ussuri mamushi).